The sequence spans 175 residues: Calcineurin subunit B (175 aa).

EF-hand domains are found at residues 21-56 (PELM…ANNP), 60-88 (RMIA…FSSK), 90-125 (GRDE…MVGN), and 131-166 (QLQQ…TDIV). Ca(2+) is bound by residues aspartate 34, aspartate 36, serine 38, serine 40, glutamate 45, aspartate 66, aspartate 68, serine 70, threonine 72, glutamate 77, aspartate 103, aspartate 105, aspartate 107, tyrosine 109, glutamate 114, aspartate 144, aspartate 146, aspartate 148, lysine 150, and glutamate 155.

This sequence belongs to the calcineurin regulatory subunit family. In terms of assembly, composed of a catalytic subunit (A) and a regulatory subunit (B).

Its function is as follows. Regulatory subunit of calcineurin, a calcium-dependent, calmodulin stimulated protein phosphatase. Confers calcium sensitivity. Plays a central role in virulence and antifungal drug action. This chain is Calcineurin subunit B (CNB1), found in Cryptococcus neoformans var. neoformans serotype D (strain B-3501A) (Filobasidiella neoformans).